Here is a 140-residue protein sequence, read N- to C-terminus: Putative nickel-responsive regulator 2 (140 aa).

Ni(2+) is bound by residues histidine 81, histidine 92, histidine 94, and cysteine 100.

It belongs to the transcriptional regulatory CopG/NikR family. Ni(2+) serves as cofactor.

Functionally, transcriptional regulator. The sequence is that of Putative nickel-responsive regulator 2 from Methanosarcina mazei (strain ATCC BAA-159 / DSM 3647 / Goe1 / Go1 / JCM 11833 / OCM 88) (Methanosarcina frisia).